The sequence spans 317 residues: Apolipoprotein E (317 aa).

The first 18 residues, 1–18 (MKVLWAALLVTFLAGCQA), serve as a signal peptide directing secretion. 8 consecutive repeat copies span residues 80–101 (ALMD…EQLT), 102–123 (PVAE…ARLG), 124–145 (ADME…AMLG), 146–167 (QSTE…KRLL), 168–189 (RDAD…EGAE), 190–211 (RGVS…VRAA), 212–233 (TVGS…ERLR), and 234–255 (ARME…EQVA). Residues 80 to 255 (ALMDETMKEL…RLDEVKEQVA (176 aa)) are 8 X 22 AA approximate tandem repeats. M143 is modified (methionine sulfoxide). The residue at position 147 (S147) is a Phosphoserine. Residues 158–168 (HLRKLRKRLLR) are LDL and other lipoprotein receptors binding. A heparin-binding site is contributed by 162-165 (LRKR). Residues 210 to 290 (AATVGSVAGK…SWFEPLVEDM (81 aa)) form a lipid-binding and lipoprotein association region. Position 229–236 (229–236 (GERLRARM)) interacts with heparin. The interval 266–317 (QQIRLQAEAFQARLKSWFEPLVEDMQRQWAGLVEKVQAAVGTSAAPVPSDNH) is homooligomerization. Residues 278 to 290 (RLKSWFEPLVEDM) form a specificity for association with VLDL region.

The protein belongs to the apolipoprotein A1/A4/E family. As to quaternary structure, homotetramer. May interact with ABCA1; functionally associated with ABCA1 in the biogenesis of HDLs. May interact with APP/A4 amyloid-beta peptide; the interaction is extremely stable in vitro but its physiological significance is unclear. May interact with MAPT. May interact with MAP2. In the cerebrospinal fluid, interacts with secreted SORL1. Interacts with PMEL; this allows the loading of PMEL luminal fragment on ILVs to induce fibril nucleation. APOE exists as multiple glycosylated and sialylated glycoforms within cells and in plasma. The extent of glycosylation and sialylation are tissue and context specific. Post-translationally, glycated in plasma VLDL. In terms of processing, phosphorylated by FAM20C in the extracellular medium.

It localises to the secreted. The protein localises to the extracellular space. Its subcellular location is the extracellular matrix. The protein resides in the extracellular vesicle. It is found in the endosome. It localises to the multivesicular body. Its function is as follows. APOE is an apolipoprotein, a protein associating with lipid particles, that mainly functions in lipoprotein-mediated lipid transport between organs via the plasma and interstitial fluids. APOE is a core component of plasma lipoproteins and is involved in their production, conversion and clearance. Apolipoproteins are amphipathic molecules that interact both with lipids of the lipoprotein particle core and the aqueous environment of the plasma. As such, APOE associates with chylomicrons, chylomicron remnants, very low density lipoproteins (VLDL) and intermediate density lipoproteins (IDL) but shows a preferential binding to high-density lipoproteins (HDL). It also binds a wide range of cellular receptors including the LDL receptor/LDLR, the LDL receptor-related proteins LRP1, LRP2 and LRP8 and the very low-density lipoprotein receptor/VLDLR that mediate the cellular uptake of the APOE-containing lipoprotein particles. Finally, APOE also has a heparin-binding activity and binds heparan-sulfate proteoglycans on the surface of cells, a property that supports the capture and the receptor-mediated uptake of APOE-containing lipoproteins by cells. A main function of APOE is to mediate lipoprotein clearance through the uptake of chylomicrons, VLDLs, and HDLs by hepatocytes. APOE is also involved in the biosynthesis by the liver of VLDLs as well as their uptake by peripheral tissues ensuring the delivery of triglycerides and energy storage in muscle, heart and adipose tissues. By participating in the lipoprotein-mediated distribution of lipids among tissues, APOE plays a critical role in plasma and tissues lipid homeostasis. APOE is also involved in two steps of reverse cholesterol transport, the HDLs-mediated transport of cholesterol from peripheral tissues to the liver, and thereby plays an important role in cholesterol homeostasis. First, it is functionally associated with ABCA1 in the biogenesis of HDLs in tissues. Second, it is enriched in circulating HDLs and mediates their uptake by hepatocytes. APOE also plays an important role in lipid transport in the central nervous system, regulating neuron survival and sprouting. The protein is Apolipoprotein E (APOE) of Pongo pygmaeus (Bornean orangutan).